Consider the following 163-residue polypeptide: 2-C-methyl-D-erythritol 2,4-cyclodiphosphate synthase (163 aa).

Positions 9 and 11 each coordinate a divalent metal cation. 4-CDP-2-C-methyl-D-erythritol 2-phosphate-binding positions include 9–11 and 36–37; these read DVH and HS. Histidine 44 contacts a divalent metal cation. 4-CDP-2-C-methyl-D-erythritol 2-phosphate contacts are provided by residues 58-60, 63-67, 134-137, phenylalanine 141, and arginine 144; these read DIG, FPDDD, and TTSE.

This sequence belongs to the IspF family. As to quaternary structure, homotrimer. A divalent metal cation serves as cofactor.

It carries out the reaction 4-CDP-2-C-methyl-D-erythritol 2-phosphate = 2-C-methyl-D-erythritol 2,4-cyclic diphosphate + CMP. Its pathway is isoprenoid biosynthesis; isopentenyl diphosphate biosynthesis via DXP pathway; isopentenyl diphosphate from 1-deoxy-D-xylulose 5-phosphate: step 4/6. Functionally, involved in the biosynthesis of isopentenyl diphosphate (IPP) and dimethylallyl diphosphate (DMAPP), two major building blocks of isoprenoid compounds. Catalyzes the conversion of 4-diphosphocytidyl-2-C-methyl-D-erythritol 2-phosphate (CDP-ME2P) to 2-C-methyl-D-erythritol 2,4-cyclodiphosphate (ME-CPP) with a corresponding release of cytidine 5-monophosphate (CMP). The protein is 2-C-methyl-D-erythritol 2,4-cyclodiphosphate synthase of Halorhodospira halophila (strain DSM 244 / SL1) (Ectothiorhodospira halophila (strain DSM 244 / SL1)).